Consider the following 197-residue polypeptide: Protein jagunal (197 aa).

Residues 1–39 (MATRGGPMVAGTDGNDFEFRQRVAGTYQISLLNKSRLKY) are Cytoplasmic-facing. A helical membrane pass occupies residues 40–60 (CIFFHALLFFVMLAKLTSDIL). Residues 61–78 (DRLDIFVLEIEELEVPSP) are Lumenal-facing. The helical transmembrane segment at 79-99 (LWWEYVWAGSLLTSFLGLSAA) threads the bilayer. The Cytoplasmic segment spans residues 100-109 (RGNKVREMQK). The helical transmembrane segment at 110-130 (YMIAILVFAILPLLYCFAYYF) threads the bilayer. Topologically, residues 131–159 (SDVWEFATMDKSVELDETDIFIWRGYPYG) are lumenal. A helical membrane pass occupies residues 160 to 180 (VFWYAFCFVGFQVHGFTLYFA). Topologically, residues 181–197 (YNLVKVWKARTATRKFQ) are cytoplasmic.

The protein belongs to the jagunal family.

Its subcellular location is the endoplasmic reticulum membrane. Required for endoplasmic reticulum organization and proper vesicular traffic during vitellogenesis. Required for oocyte and bristle growth. This Drosophila pseudoobscura pseudoobscura (Fruit fly) protein is Protein jagunal.